The primary structure comprises 83 residues: Small ribosomal subunit protein bS16 (83 aa).

This sequence belongs to the bacterial ribosomal protein bS16 family.

The chain is Small ribosomal subunit protein bS16 from Pseudomonas putida (strain ATCC 700007 / DSM 6899 / JCM 31910 / BCRC 17059 / LMG 24140 / F1).